The primary structure comprises 1325 residues: SCAN domain-containing protein 3 (1325 aa).

The SCAN box domain maps to 52–134 (RQRFRQFCYQ…TLLEDLEREL (83 aa)). Residues 246 to 275 (KAKYCQLIKEVKEAKAKAKKESVDYRRLAR) are a coiled coil. An Integrase catalytic domain is found at 366 to 526 (KSIKEVSSRC…TPCESAFSSE (161 aa)). The stretch at 542-568 (ASLHTENELDQADKELENTLRAQYEEN) forms a coiled coil.

Weakly expressed in the lung (at protein level).

The protein localises to the nucleus. The polypeptide is SCAN domain-containing protein 3 (Homo sapiens (Human)).